The chain runs to 122 residues: MQMAHIGTDIIEIARIRKAIETHNQRMLNKIFTKKEQEYCLRLTNPYPSFAARFAGKEAVAKALGTGIGKVIGWKDIEILTSPKQPKVHLPPRVYKELGISKVLLSISHSREYATAMAVALV.

Mg(2+) contacts are provided by Asp9 and Glu58.

This sequence belongs to the P-Pant transferase superfamily. AcpS family. It depends on Mg(2+) as a cofactor.

It is found in the cytoplasm. It carries out the reaction apo-[ACP] + CoA = holo-[ACP] + adenosine 3',5'-bisphosphate + H(+). Functionally, transfers the 4'-phosphopantetheine moiety from coenzyme A to a Ser of acyl-carrier-protein. This chain is Holo-[acyl-carrier-protein] synthase, found in Chlamydia felis (strain Fe/C-56) (Chlamydophila felis).